Here is a 142-residue protein sequence, read N- to C-terminus: Hemoglobin subunit alpha-1 (142 aa).

The Globin domain maps to 2–142; sequence KLTAEDKHNV…VAYVLASKYR (141 aa). His59 contacts O2. His88 serves as a coordination point for heme b.

The protein belongs to the globin family. As to quaternary structure, major hemoglobin is a heterotetramer of two alpha-1 chains and two beta-1 chains. In terms of tissue distribution, red blood cells.

In terms of biological role, involved in oxygen transport from the lung to the various peripheral tissues. This is Hemoglobin subunit alpha-1 from Pleurodeles waltl (Iberian ribbed newt).